Consider the following 462-residue polypeptide: Argininosuccinate lyase (462 aa).

Belongs to the lyase 1 family. Argininosuccinate lyase subfamily.

It localises to the cytoplasm. It carries out the reaction 2-(N(omega)-L-arginino)succinate = fumarate + L-arginine. Its pathway is amino-acid biosynthesis; L-arginine biosynthesis; L-arginine from L-ornithine and carbamoyl phosphate: step 3/3. This is Argininosuccinate lyase from Bacillus cereus (strain ZK / E33L).